We begin with the raw amino-acid sequence, 535 residues long: Flavonoid 3'-monooxygenase CYP75B4 (535 aa).

Residues 8-28 (ISTSLLLTTVALSVIVCYALV) traverse the membrane as a helical segment. C469 provides a ligand contact to heme.

This sequence belongs to the cytochrome P450 family. Heme serves as cofactor.

The protein resides in the membrane. It catalyses the reaction a 3'-unsubstituted flavone + reduced [NADPH--hemoprotein reductase] + O2 = a 3'-hydroxyflavone + oxidized [NADPH--hemoprotein reductase] + H2O + H(+). It participates in secondary metabolite biosynthesis; flavonoid biosynthesis. Functionally, catalyzes the 3'-hydroxylation of the flavonoid B-ring to the 3',4'-hydroxylated state. Catalyzes in vitro 3'-hydroxylation of different flavonoids. Catalyzes the conversion of apigenin to luteolin, naringenin to eriodictyol, and kaempferol to quercetin. Possesses specific 5'-hydroxylase activity toward chrysoeriol (a 3'-methoxylated flavone) and is indispensable for tricin formation. Converts chrysoeriol to selgin, a precursor of tricin, suggesting that chrysoeriol, instead of tricetin, is an intermediate in tricin biosynthesis. The polypeptide is Flavonoid 3'-monooxygenase CYP75B4 (Oryza sativa subsp. japonica (Rice)).